An 80-amino-acid chain; its full sequence is Cell division protein ZapB (80 aa).

Residues 3–80 (FEVLEQLESK…ALLGKMDEVE (78 aa)) are a coiled coil.

It belongs to the ZapB family. As to quaternary structure, homodimer. The ends of the coiled-coil dimer bind to each other, forming polymers. Interacts with FtsZ.

It is found in the cytoplasm. Non-essential, abundant cell division factor that is required for proper Z-ring formation. It is recruited early to the divisome by direct interaction with FtsZ, stimulating Z-ring assembly and thereby promoting cell division earlier in the cell cycle. Its recruitment to the Z-ring requires functional FtsA or ZipA. This Vibrio parahaemolyticus serotype O3:K6 (strain RIMD 2210633) protein is Cell division protein ZapB.